The chain runs to 659 residues: Exoribonuclease 2 (659 aa).

The RNB domain occupies 189-531 (RKDLTALHFV…NHRLIKACIA (343 aa)). The region spanning 576–658 (KPEFQAEVQD…ETRSLIGNLV (83 aa)) is the S1 motif domain.

The protein belongs to the RNR ribonuclease family. RNase II subfamily.

It localises to the cytoplasm. The catalysed reaction is Exonucleolytic cleavage in the 3'- to 5'-direction to yield nucleoside 5'-phosphates.. Functionally, involved in mRNA degradation. Hydrolyzes single-stranded polyribonucleotides processively in the 3' to 5' direction. In Actinobacillus succinogenes (strain ATCC 55618 / DSM 22257 / CCUG 43843 / 130Z), this protein is Exoribonuclease 2.